A 415-amino-acid polypeptide reads, in one-letter code: MTPPQKSKPKRNRRKIYKILPQNQCPSVCQICRNPAIGYHYEVPSCNGCKTFFRRTIITGRKFKCFKVSNCLDGNDVIDTSKRVCRACRFEKCVQAGMNPMAIQAEAKTDEGEELKKLIAKKFENGEKLNDGTVFFNVHDRLNQILGKLIKIETKLEKVHDNGMPMGFLDQRDLSTALSSKVIYNNMEIPSMSYTPVKISKNTGLPKRRSRNFVHSSCLASIEYSKTFDFSSAIDISSKIILLKNTALSCANLTNAYTTFRKLKSDTLLYPDGSIYGPPRRKNGPLIEKQRSFLQNTLISFMTNNVDKTEYILLKAIVLCNPAIIDLPYADSKHIQREREVYAQCLFRYCLLQHGTLHGPARFSALLSIFNVLENQQKEQKDYYLYIKLIHSQKHKDPEVLKKKCISVIYDQIMD.

A DNA-binding region (nuclear receptor) is located at residues Pro26 to Ala105. 2 NR C4-type zinc fingers span residues Cys29–Cys49 and Cys65–Cys88. Residues Asp170–Ile406 form the NR LBD domain.

This sequence belongs to the nuclear hormone receptor family.

The protein resides in the nucleus. Orphan nuclear receptor. This is Nuclear hormone receptor family member nhr-153 (nhr-153) from Caenorhabditis elegans.